Consider the following 234-residue polypeptide: Small ribosomal subunit protein uS2c (234 aa).

Belongs to the universal ribosomal protein uS2 family.

Its subcellular location is the plastid. The protein resides in the chloroplast. This Pinus koraiensis (Korean pine) protein is Small ribosomal subunit protein uS2c (rps2).